The sequence spans 775 residues: MASLIYRQLLTNSYSVDLHDEIEQIGSEKTQNVTINPGPFAQTRYAPVNWGHGEINDSTTLEPILDGPYQPTTFTPPNDYWILINSNTNGVVYESTNNSDFWTAVVAIEPHVNPVDRQYTIFGESKQFNVSNNTNKWKFFEMFISSSQNEFYNRRTLTSDTRLVGILKYGGRVWTFHGETPRATTDSSSTANLNNISITIHSEFYIIPRSQESKCNEYINNGLPPIQNTRNVVPLPLSSRSIQYKRAQVNEDIIVSKTSLWKEMQYYRDIIIRFKFGNSIVKVGGLGYKWSEISYKAANYQYNYLRDGEQVTAHTTCSVNGVNNFSYNGGSLPTDFGISRYEVIKENSYVYVDYWDDSKAFRNMVYVRSLAANLNSVKCTGGSYDFSIPVGAWPVMNGGAVSLHFDGVTLSTQFTDFVSLNSLRFRLSLTVDEPSFSIMRTRIVNLFGFPAANPNNGNEYYEISGRFSLISLVPTNDDYQTPIMNSVTVRQDLERQLTDLREEFNSLSQEIAMAQLIDLALLPSDMFSMFSGIKSTIDLTKSMATSVMKKFRKSKLATSISEMTNSLSDAASSASRNVSIRSNLSAISNWTNVSNDVSNVADSLNDVSTQTSTISKKLRLKEMITQTEGMSFDDISAAVLKTKIDMSTQIGKNTLPDIVTEASEKFIPKRSYRILKDDEVMEINTEGKFFAYKINTFDEVPFDVNKFAELVTDSPVISAIIDFKTLKNLNDNYGITRTEAFNLIKSNPTMLRNFINQNHPIIRNRIEQLILQCRL.

Residues 65-223 (LDGPYQPTTF…KCNEYINNGL (159 aa)) form a spike head region. The segment at 247 to 478 (AQVNEDIIVS…LISLVPTNDD (232 aa)) is spike body and stalk (antigen domain). Positions 307-309 (DGE) match the DGE motif; interaction with ITGA2/ITGB1 heterodimer motif. Cysteine 317 and cysteine 379 are joined by a disulfide. The segment at 388–408 (IPVGAWPVMNGGAVSLHFDGV) is hydrophobic; possible role in virus entry into host cell. Residues 483–517 (IMNSVTVRQDLERQLTDLREEFNSLSQEIAMAQLI) adopt a coiled-coil conformation. Positions 509 to 775 (QEIAMAQLID…IEQLILQCRL (267 aa)) are spike foot. Positions 643–645 (KID) match the KID motif; interaction with HSPA8 motif.

Belongs to the rotavirus VP4 family. Homotrimer. VP4 adopts a dimeric appearance above the capsid surface, while forming a trimeric base anchored inside the capsid layer. Only hints of the third molecule are observed above the capsid surface. It probably performs a series of molecular rearrangements during viral entry. Prior to trypsin cleavage, it is flexible. The priming trypsin cleavage triggers its rearrangement into rigid spikes with approximate two-fold symmetry of their protruding parts. After an unknown second triggering event, cleaved VP4 may undergo another rearrangement, in which two VP5* subunits fold back on themselves and join a third subunit to form a tightly associated trimer, shaped like a folded umbrella. Interacts with VP6. Interacts with VP7. As to quaternary structure, homotrimer. The trimer is coiled-coil stabilized by its C-terminus, however, its N-terminus, known as antigen domain or 'body', seems to be flexible allowing it to self-associate either as a dimer or a trimer. In terms of processing, proteolytic cleavage by trypsin results in activation of VP4 functions and greatly increases infectivity. The penetration into the host cell is dependent on trypsin treatment of VP4. It produces two peptides, VP5* and VP8* that remain associated with the virion. Cleavage of VP4 by trypsin probably occurs in vivo in the lumen of the intestine prior to infection of enterocytes. Trypsin seems to be incorporated into the three-layered viral particles but remains inactive as long as the viral outer capsid is intact and would only be activated upon the solubilization of the latter.

It is found in the virion. Its subcellular location is the host rough endoplasmic reticulum. The protein resides in the host cell membrane. It localises to the host cytoplasm. The protein localises to the host cytoskeleton. It is found in the host endoplasmic reticulum-Golgi intermediate compartment. In terms of biological role, spike-forming protein that mediates virion attachment to the host epithelial cell receptors and plays a major role in cell penetration, determination of host range restriction and virulence. Rotavirus attachment and entry into the host cell probably involves multiple sequential contacts between the outer capsid proteins VP4 and VP7, and the cell receptors. It is subsequently lost, together with VP7, following virus entry into the host cell. Following entry into the host cell, low intracellular or intravesicular Ca(2+) concentration probably causes the calcium-stabilized VP7 trimers to dissociate from the virion. This step is probably necessary for the membrane-disrupting entry step and the release of VP4, which is locked onto the virion by VP7. During the virus exit from the host cell, VP4 seems to be required to target the newly formed virions to the host cell lipid rafts. Forms the spike 'foot' and 'body' and acts as a membrane permeabilization protein that mediates release of viral particles from endosomal compartments into the cytoplasm. During entry, the part of VP5* that protrudes from the virus folds back on itself and reorganizes from a local dimer to a trimer. This reorganization may be linked to membrane penetration by exposing VP5* hydrophobic region. In integrin-dependent strains, VP5* targets the integrin heterodimer ITGA2/ITGB1 for cell attachment. Its function is as follows. Forms the head of the spikes and mediates the recognition of specific host cell surface glycans. It is the viral hemagglutinin and an important target of neutralizing antibodies. In sialic acid-dependent strains, VP8* binds to host cell sialic acid, most probably a ganglioside, providing the initial contact. In some other strains, VP8* mediates the attachment to histo-blood group antigens (HBGAs) for viral entry. This Homo sapiens (Human) protein is Outer capsid protein VP4.